The following is a 680-amino-acid chain: MVKVEDDVEGSGINASVGDLRDAAVNPQPALLRATVKEEEGQPSSSSSHVRSQFIGMGFSPMLVDRVLQKHGDRDSDTILEALLSQSALQKSGSESGSLGDLFDSDNEENSSHFAPRKEVIQDIKVEADSSSEKRSYLLSTMNFSQREVDLALNQLGEEASLEQLVDFIVTGQVSGCSGGNENGDASNEVKDESLFGVMDKTLHLLQMGFTEEEVSSVIDKAGPEATVLELADTIFARRIASSIEQKEVKVEPDFLDETETSYSAYHPSNSGLRYYDDDHDNIRIKRAKHMFIDDSAGSSSRAGNQPNLDPWLKDHRATTSDGSVKEEFDAMTPGIRRNVRSDVANPPYFLYGNVVEIPKATWRQLSEFLYNVEPEFVNSQFFSALSRKEGYIHNLPTEGRRNLVPRSPMTIEEAFPFTRQCWPSWDTRKQLNSVATEVAGIEQLCERLGKMVRDSGGYLSQEKKTHIMHQCKLANLIWVGPDRLSPLDPQQVERILGYPRKHTNLFGLNPQDRIEAMRYSFQTDTLGYLLSVLKDLYPDGLRVLSIYSGIGGAAIALHRLGIPLQCVVSVDQSDTNRKILRRWWSNTEQKGQLRQINTIWKLKINVLEDLVKEFGGFDIIIGGNFSSCKGGTTVNSSMGMDSNQFFEYVRVVQRVKHIMGRLQVRAHESARHRHRSPSN.

Positions 1–24 (MVKVEDDVEGSGINASVGDLRDAA) are disordered. The region spanning 45–86 (SSSSHVRSQFIGMGFSPMLVDRVLQKHGDRDSDTILEALLSQ) is the UBA 1 domain. A disordered region spans residues 91–113 (KSGSESGSLGDLFDSDNEENSSH). One can recognise a UBA 2 domain in the interval 194-235 (SLFGVMDKTLHLLQMGFTEEEVSSVIDKAGPEATVLELADTI). Positions 336–663 (IRRNVRSDVA…QRVKHIMGRL (328 aa)) constitute an SAM-dependent MTase DRM-type domain.

Belongs to the class I-like SAM-binding methyltransferase superfamily. DRM-methyltransferase family.

It localises to the nucleus. Involved in de novo DNA methylation. Involved in RNA-directed DNA methylation (RdDM). This is Probable inactive DNA (cytosine-5)-methyltransferase DRM3 from Oryza sativa subsp. japonica (Rice).